The sequence spans 539 residues: Serine/threonine-protein kinase 35 (539 aa).

Residues 103–161 (ITIQGPAPPHLGARRRDEARGARAAPLLLPPPPAAMETGKENGARRGTKSPERKRRSPV) are disordered. Residues 148–160 (RGTKSPERKRRSP) show a composition bias toward basic residues. Positions 207-535 (YSLLAEIGRG…FELETRMDQV (329 aa)) constitute a Protein kinase domain. Residues 213 to 221 (IGRGSYGVV) and lysine 236 each bind ATP. The active-site Proton acceptor is aspartate 365.

Belongs to the protein kinase superfamily. Ser/Thr protein kinase family. Interacts with PDLIM1/CLP-36. Autophosphorylated.

Its subcellular location is the nucleus. The protein localises to the nucleolus. It localises to the cytoplasm. The enzyme catalyses L-seryl-[protein] + ATP = O-phospho-L-seryl-[protein] + ADP + H(+). It carries out the reaction L-threonyl-[protein] + ATP = O-phospho-L-threonyl-[protein] + ADP + H(+). The chain is Serine/threonine-protein kinase 35 (Stk35) from Mus musculus (Mouse).